Here is a 107-residue protein sequence, read N- to C-terminus: Thiosulfate sulfurtransferase GlpE (107 aa).

Residues 17–105 form the Rhodanese domain; it reads ADDNALLVDI…WRIAFPQQVS (89 aa). The active-site Cysteine persulfide intermediate is Cys-65.

It belongs to the GlpE family.

The protein resides in the cytoplasm. The catalysed reaction is thiosulfate + hydrogen cyanide = thiocyanate + sulfite + 2 H(+). It carries out the reaction thiosulfate + [thioredoxin]-dithiol = [thioredoxin]-disulfide + hydrogen sulfide + sulfite + 2 H(+). Transferase that catalyzes the transfer of sulfur from thiosulfate to thiophilic acceptors such as cyanide or dithiols. May function in a CysM-independent thiosulfate assimilation pathway by catalyzing the conversion of thiosulfate to sulfite, which can then be used for L-cysteine biosynthesis. In Erwinia tasmaniensis (strain DSM 17950 / CFBP 7177 / CIP 109463 / NCPPB 4357 / Et1/99), this protein is Thiosulfate sulfurtransferase GlpE.